Reading from the N-terminus, the 338-residue chain is UPF0194 membrane protein in asrC 5'region (338 aa).

Positions 1-23 (MAISPKKRALALVVVLIVAGAVA) are cleaved as a signal peptide. The stretch at 148-207 (KQSLDNAAAALKTARANLDRAQQALTLAIKGPRKEDIAAARQQLQADKAGLSLARRELTD) forms a coiled coil.

The protein belongs to the UPF0194 family.

Its subcellular location is the periplasm. The chain is UPF0194 membrane protein in asrC 5'region from Acidithiobacillus ferridurans.